Consider the following 6930-residue polypeptide: MEGVPDPPKLKSMVVTTLKWCDPFANPNVTGWDIPIEEALEYAKQQLRTPEPQLVFVPYYLSHAPGISGDRVVITDSIWYATNFGWQPIRELAMDKDGVRYGRGGTHGVLLPMQDPSFIMGDIDIQIRKYGIGANSPPDVLPLWDGFSDPGPDVGPYLDFPDNCCPTKPKAKRGGDVYLSDQYGFDNNGILVEPVMKLLGVIKSDFTLEQLLAALGKYRTEDGYDLPDGYVKVAIKVGRKAVPVLKQSIFTVVGVTEQLVPGYYYPFSTSSVVEHTKPTRGGPVGKTVEAVMLSLYGTNNYNPATPVARLKCSYCDYYGWTPLKDIGTVNCLCGAEFQLTSSCVDAESAGVIKPGCVMLLDKSPGMRLIPGNRTYVSFGGAIWSPIGKVNGVTVWVPRAYSIVAGEHSGAVGSGDTVAINKELVEYLIEGIRVDADTLDNPTCATFIANLDCDTKAPVVHTVESLQGLCLANKIMLGDKPLPTDEFHPFIVGLAYHVQRACWYGALASRTFEAFRDFVRTEEERFAQFFGKVCAPINGCVYLAYTTGRVTLFSAYQVLNTAIAKSKDAFGGVAAIVVDMLKPILEWVLKKMSIAKGAWLPYAEGLLALFKAQFTVVKGKFQFLRASLNSKCHSLCDLLTTIMSKLLTSVKWAGCKVDALYTGTYYYFSRKGVLTEVQLCAKRLGLLLTPKQQKMEVEVLDGDFDAPVTLTDLELEECTGVLEEVFGASDVKLVKGTLVSLASKLFVRTEDGFLYRYVKSGGVLGKAFRLRGGGVSKVTFGDEEVHTIPNTVTVNFSYDVCEGLDAILDKVMAPFQVEEGTKLEDLACVVQKAVYERLSDLFSDCPAELRPINLEDFLTSECFVYSKDYEKILMPEMYFSLEDAVPVDDEMVDDIEDTVEQASDSDDQWLGDEGAEDCDNTIQDVDVATSMTTPCGYTKIAEHVYIKCADIVQEARNYSYAVLVNAANVNLHHGGGVAGALNRATNNAMQKESSEYIKANGSLQPGGHVLLSSHGLASHGILHVVGPDKRLGQDLALLDAVYAAYTGFDSVLTPLVSAGIFGFTVEESLCSLVKNVACTTYVVVYDRQLYERALATSFDVPGPQSSVQHVPAIDWAEAVEVQESIVDQVETPSLGAVDTVDSNADSGLNETARSPENVVGSVPDDVVADVESCVRDLVRQVVKKVKRDKRPPPIVPQQTVEQQPQEISSPGDCNTVLVDVVSMSFSAMVNFGKEKGLLIPVVIDYPAFLKVLKRFSPKEGLFSSNGYEFYGYSRDKPLHEVSKDLNSLGRPLIMIPFGFIVNGQTLAVSAVSMRGLTVPHTVVVPSESSVPLYRAYFNGVFSGDTTAVQDFVVDILLNGARDWDVLQTTCTVDRKVYKTICKRGNTYLCFDDTNLYAITGDVVLKFATVSKARAYLETKLCAPEPLIKVLTTVDGINYSTVLVSTAQSYRAQIGTVFCDGHDWSNKNPMPTDEGTHLYKQDNFSSAEVTAIREYYGVDDSNIIARAMSIRKTVQTWPYTVVDGRVLLAQRDSNCYLNVAISLLQDIDVSFSTPWVCRAYDALKGGNPLPMAEVLIALGKATPGVSDDAHMVLSAVLNHGTVTARRVMQTVCEHCGVSQMVFTGTDACTFYGSVVLDDLYAPVSVVCQCGRPAIRYVSEQKSPWLLMSCTPTQVPLDTSGIWKTAIVFRGPVTAGHYMYAVNGTLISVYDANTRRRTSDLKLPATDILYGPTSFTSDSKVETYYLDGVKRTTIDPDFSKYVKRGDYYFTTAPIEVVAAPKLVTSYDGFYLSSCQNPQLAESFNKAINATKTGPMKLLTMYPNVAGDVVAISDDNVVAHPYGSLHMGKPVLFVTRPNTWKKLVPLLSTVVVNTPNTYDVLAVDPLPVNNETSEEPISVKAPIPLYGLKATMVLNGTTYVPGNKGHLLCLKEFTLTDLQTFYVEGVQPFVLLKASHLSKVLGLRVSDSSLHVNHLSKGVVYAYAATRLTTRVTTSLLGGLVTRSVRKTADFVRSTNPGSKCVGLLCLFYQLFMRFWLLVKKPPIVKVSGIIAYNTGCGVTTCVLNYLRSRCGNISWSRLLKLLRYMLYIWFVWTCLTICGVWLSEPYAPSLVTRFKYFLGIVMPCDYVLVNETGTGWLHHLCMAGMDSLDYPALRMQQHRYGSPYNYTYILMLLEAFFAYLLYTPALPIVGILAVLHLIVLYLPIPLGNSWLVVFLYYIIRLVPFTSMLRMYIVIAFLWLCYKGFLHVRYGCNNVACLMCYKKNVAKRIECSTVVNGVKRMFYVNANGGTHFCTKHNWNCVSCDTYTVDSTFICRQVALDLSAQFKRPIIHTDEAYYEVTSVEVRNGYVYCYFESDGQRSYERFPMDAFTNVSKLHYSELKGAAPAFNVLVFDATNRIEENAVKTAAIYYAQLACKPILLVDKRMVGVVGDDATIARAMFEAYAQNYLLKYSIAMDKVKHLYSTALQQISSGMTVESVLKVFVGSTRAEAKDLESDVDTNDLVSCIRLCHQEGWEWTTDSWNNLVPTYIKQDTLSTLEVGQFMTANAKYVNANIAKGAAVNLIWRYADFIKLSESMRRQLKVAARKTGLNLLVTTSSLKADVPCMVTPFKIIGGHRRIVSWRRVLIHVFMLLVVLNPQWFTPWYIMRPIEYNVVDFKVIDNAVIRDITSADQCFANKFSAFENWYSNRYGSYVNSRGCPMVVGVVSDIVGSLVPGLPARFLRVGTTLLPLVNYGLGAVGSVCYTPHYAINYDVFDTSACVLAATCTLFSSASGERMPYCADAALIQNASRYDMLKPHVMYPFYEHSGYIRFPEVISAGVHIVRTMAMEYCKVGRCDVSEAGLCMSLQPRWVVNNAYFRQQSGVYCGTSAFDLFMNMLLPIFTPVGAVDITTSILMGALLAVVVSMSLYYLLRFRRAFGDYSGVIFTNILAFVLNVIVLCLEGPYPMLPSIYAMVFLYATCYFGSDIACMMHVSFLIMFAGVVPLWVTVLYIVVVLSRHILWFASLCTKRTVQVGDLAFHSFQDAALQTFMLDKEVFLRLKREISSDAYFKYLAMYNKYKYYSGPMDTAAYREAACSHLVMALEKYSNGGGDTIYQPPRCSVASAALQAGLTRMAHPSGLVEPCLVKVNYGSMTLNGIWLDNFVICPRHVMCSRDELANPDYPRLSMRAANYDFHVSQNGHNIRVIGHTMEGSLLKLTVDVNNPKTPAYSFIRVSTGQAMSLLACYDGLPTGVYTCTLRSNGTMRASFLCGSCGSPGFVMNGKEVQFCYLHQLELPNGTHTGTDFSGVFYGPFEDKQVPQLAAPDCTITVNVLAWLYAAVLSGENWFLTKSSISPAEFNNCAVKYMCQSVTSESLQVLQPLAAKTGISVERMLSALKVLLSAGFCGRTIMGSCSLEDEHTPYDIGRQMLGVKLQGKFQSMFRWTLQWFAIIFVLTILILLQLAQWTFVGALPFTLLLPLIGFVAVCVGFVSLLIKHKHTYLTVYLLPVAMVTAYYNFQYTPEGVQGYLLSLYNYVNPGRIDVIGTDLLTMLIISVACTLLSVRMVRTDAYSRIWYVCTAVGWLYNCWTGSADTVAISYLTFMVSVFTNYTGVACASLYAAQFMVWVLKFLDPTILLLYGRFRCVLVCYLLVGYLCTCYFGVFNLINRLFRCTLGNYEYVVSSQELRYMNSHGLLPPTNSWQALMLNIKLAGIGGIPIYRVSTIQSNMTDLKCTSVVLLSVLQQLRVESSSKLWALCVKLHNEILASNSPTEAFEAFVSLLSVLLSLPGAINLDELCSSILENNSVLQAVASEFSNLSSYVDYENAQKAYDTAVATGAPASTVNALKKAMNVAKSVLDKDVATTRKLERMSELAMTAMYKQARAEDRRSKVTAAMQTMLFNMIRRLDSDALSNILNNARNGVVPLGVIPRTAANKLLLVVPDFSVYTATITMPTLTYAGSAWDVMQVADADGKTVNATDITRENSVNLAWPLVVTAQRQQATSPVKLQNNELMPQTVKRMNVVAGVSQTACVTDAVAYYNATKEGRHVMAILADTDGLAFAKVEKSTGDGFVILELEPPCKFMVDTPKGPALKYLYFTKGLKNLCRGTVLGTLACTVRLHAGSATEVASNSSILSLCSFSVDPEATYKDYLDNGGSPIGNCVKMLTPHTGTGLAITAKPDANIDQESFGGASCCLYCRCHIEHPGASGVCKYKGKFVQIPLVGVNDPIGFCIRNVVCAVCNMWQGYGCPCSSLREINLQARDECFLNRVRGTSGVARLVPLGSGVQPDIVLRAFDICNTKVAGFGLHLKNNCCRYQELDADGTQLDSYFVVKRHTESNYLLEQRCYEKLKDCGVVARHDFFKFNIEGVMTPHVSRERLTKYTMADLVYSLRHFDNNNCDTLKEILVLRGCCTADYFDRKDWYDPVENPDIIRVYHNLGETVRKAVLSAVKMADSMVEQGLIGVLTLDNQDLNGQWYDFGDFIEGPAGAGVAVMDTYYSLAMPVYTMTNMLAAECHVDGDFSKPKRVWDICKYDYTQFKYSLFSKYFKYWDMQYHPNCVACADDRCILHCANFNILFSMVLPNTSFGPLVQKIYVDGVPFVVSTGYHYRELGVVMNQDIRQHAQRLSLRELLVYAADPAMHVAASNALADKRTVCMSVAAMTTGVTFQTVKPGQFNEDFYNFAVKCGFFKEGSTISFKHFFYAQDGNAAISDYDYYRYNLPTMCDIKQLLFSLEVVDKYFDCYDGGCLQASQVVVANYDKSAGFPFNKFGKARLYYESLSYADQDELFAYTKRNVLPTITQMNLKYAISAKNRARTVAGVSIASTMTNRQFHQKMLKSIAAARGASVVIGTTKFYGGWNRMLRTLCEGVENPHLMGWDYPKCDRAMPNLLRIFASLILARKHATCCNASERFYRLANECAQVLSEMVLCGGGFYVKPGGTSSGDSTTAYANSVFNICQAVSANLNTFLSIDGNKIYTTYVQELQRRLYLGIYRSNTVDNELVLDYYNYLRKHFSMMILSDDGVVCYNADYAQKGYVADIQGFKELLYFQNNVFMSESKCWVEPDITKGPHEFCSQHTMLVDMKGEQVYLPYPDPSRILGAGCFVDDLLKTDGTLMMERYVSLAIDAYPLTKHPDPEYQNVFWCYLQYIKKLHEELTGHLLDTYSVMLASDNASKYWEVEFYENMYMESATLQSVGTCVVCNSQTSLRCGGCIRRPFLCCKCCYDHVVSTTHKLVLSVTPYVCNNPSCDVADVTQLYLGGMSYYCRDHRPPISFPLCANGQVFGLYKNICTGSPDVADFNSLATCDWSNSKDYVLANTATERLKLFAAETLRATEENAKQAYASAVVKEVLSDRELVLSWETGKTRPPLNRNYVFTGFHITKNSKVQLGEYIFEKGDYGDVVNYRSSTTYKLQVGDYFVLTSHSVQPLSSPTLLPQERYTKLVGLYPAMNVPESFASNVVHYQRVGMSRYTTVQGPPGTGKSHLSIGLALYYPSAKIVYTACSHAAVDALCEKAHKNLPINRCSRIVPAKARVECFSKFKVNDVGAQYVFSTINALPETTADILVVDEVSMCTNYDLSMINARVRAKHIVYVGDPAQLPAPRTLLTKGTLAPEHFNSVCRLMVAVGPDIFLATCYRCPKEIVDTVSALVYDKKLKANKVTTGECYKCYYKGSVTHDSSSAINKPQLGLVKEFLIKNPKWQSAVFISPYNSQNSVARRMLGLQTQTVDSSQGSEFDYVIYCQTSDTAHALNVNRFNVAITRAKKGILCVMSDSTLYESLEFTPLDVNDYVKPKMQSEVTVGLFKDCAKAEPLGPAYAPTFVSVNDKFKLNESLCVHFDTTELQMPYNRLISKMGFKFDLNIPGYSKLFITREQAIREVRGWVGFDVEGAHACGPNIGTNLPLQIGFSTGVNFVVTPSGYIDTESGSRLANVVSKAPPGDQFKHLIPLMRKGEPWSVVRKRIVEMLCDTLDGVSDTVTFVTWAHGFELTTLHYFAKVGPERKCFMCPRRATLFSSVYGAYSCWSHHRHIGGADFVYNPFLVDVQQWGYVGNLQVNHDNVCDVHKGAHVASCDAIMTRCLAIHDCFCGEVNWDVEYPIIANELAINRACRSVQRVVLKAAVKALHIETIYDIGNPKAIKVYGVNVNNWNFYDTNPVVEGVKQLHYVYDVHRDQFKDGLAMFWNCNVDCYPHNALVCRFDTRVLSKLNLAGCNGGSLYVNQHAFHTDAFNKNAFVNLKPLPFFYYSDTACENATGVSTNYVSEVDYVPLKSNVCITRCNLGGAVCKKHADEYRNFLESYNTMVSAGFTLWVDKTFDVFNLWSTFVKLQSLENVAYNVLKSGHFTAVAGELPVAILNDRLYIKEDGADKLLFTNNTCLPTNVAFELWAKRSVNVVPEVKLLRNLGVTCTYNLVIWDYESNAPLVPNTVGICTYTDLTKLDDQVVLVDGRQLDAYSKFCQLKNAIYFSPSKPKCVCTRGPTHASINGVVVEAPDRGTAFWYAMRKDGAFVQPTDGYFTQSRTVDDFQPRTQLEIDFLDLEQSCFLDKYDLHDLGLEHIVYGQFDGTIGGLHLLIGAVRRKRTAHLVMETVLGTDTVTSYAVIDQPTASSKQVCSVVDIILDDFIALIKAQDRSVVSKVVQCCLDFKVFRFMLWCKGGKISTFYPQLQAKQDWKPGYSMPALYKVQNAVLEPCLLHNYGQAARLPSGTLMNVAKYTQLCQYLNTCSLAVPAKMRVMHFGAGSDKGVCPGTAVLKQWLPADAYLVDNDLCYCASDADSTYVGSCETFFSVNKWDFIFSDMYDARTKNTSGDNTSKEGFFTYLTGFIRSKLALGGSIAIKITEHSWSADLYAIMGHFNWWTCFCTSVNSSSSEAFLIGVNYIGVGALLDGWQMHANYVFWRNSTVMQLSSYSLYDLQRFPLRLKGTPVMSLKEDQLNELVLNLIRAGRLIVRDAVDIGVRGVACSGV.

The CoV Nsp1 globular domain maps to 10–131; that stretch reads LKSMVVTTLK…DIDIQIRKYG (122 aa). Residues 149 to 175 form the BetaCoV Nsp1 C-terminal domain; it reads DPGPDVGPYLDFPDNCCPTKPKAKRGG. In terms of domain architecture, CoV Nsp2 N-terminal spans 177-431; that stretch reads VYLSDQYGFD…ELVEYLIEGI (255 aa). The Zn(2+) site is built by Cys-312, Cys-315, Cys-331, and Cys-333. A C4 region spans residues 312–333; sequence CSYCDYYGWTPLKDIGTVNCLC. The CoV Nsp2 middle domain occupies 432–644; that stretch reads RVDADTLDNP…CDLLTTIMSK (213 aa). The region spanning 646-772 is the CoV Nsp2 C-terminal domain; it reads LTSVKWAGCK…LGKAFRLRGG (127 aa). One can recognise a Ubiquitin-like 1 domain in the interval 775-885; that stretch reads SKVTFGDEEV…MYFSLEDAVP (111 aa). In terms of domain architecture, Macro 1 spans 930 to 1097; sequence MTTPCGYTKI…LYERALATSF (168 aa). The tract at residues 1188–1207 is disordered; sequence KRPPPIVPQQTVEQQPQEIS. Positions 1195 to 1206 are enriched in low complexity; it reads PQQTVEQQPQEI. The 125-residue stretch at 1216–1340 folds into the Macro 2 domain; sequence LVDVVSMSFS…LYRAYFNGVF (125 aa). Residues 1345–1417 enclose the DPUP domain; the sequence is TAVQDFVVDI…VSKARAYLET (73 aa). The Ubiquitin-like 2 domain maps to 1423–1478; sequence EPLIKVLTTVDGINYSTVLVSTAQSYRAQIGTVFCDGHDWSNKNPMPTDEGTHLYK. In terms of domain architecture, Peptidase C16 spans 1492–1757; the sequence is EYYGVDDSNI…RTTIDPDFSK (266 aa). The active-site For PL-PRO activity is the Cys-1533. Cys-1610, Cys-1613, Cys-1645, and Cys-1647 together coordinate Zn(2+). The C4-type zinc finger occupies 1610–1647; that stretch reads CEHCGVSQMVFTGTDACTFYGSVVLDDLYAPVSVVCQC. Catalysis depends on for PL-PRO activity residues His-1694 and Asp-1708. The region spanning 1770–1870 is the Nucleic acid-binding domain; it reads PIEVVAAPKL…PLLSTVVVNT (101 aa). Residues 1883–2012 form the G2M domain; sequence PVNNETSEEP…KTADFVRSTN (130 aa). 3 consecutive transmembrane segments (helical) span residues 2015–2035, 2040–2060, and 2081–2101; these read SKCV…WLLV, IVKV…TCVL, and YMLY…WLSE. Residues 2015 to 2238 are HD1; that stretch reads SKCVGLLCLF…IVIAFLWLCY (224 aa). In terms of domain architecture, 3Ecto spans 2105-2162; sequence PSLVTRFKYFLGIVMPCDYVLVNETGTGWLHHLCMAGMDSLDYPALRMQQHRYGSPYN. A disulfide bond links Cys-2121 and Cys-2138. 3 consecutive transmembrane segments (helical) span residues 2162-2182, 2183-2203, and 2218-2238; these read NYTY…YTPA, LPIV…PIPL, and LVPF…WLCY. The tract at residues 2239-2329 is Y1; the sequence is KGFLHVRYGC…QFKRPIIHTD (91 aa). The CoV Nsp3 Y domain maps to 2239 to 2610; that stretch reads KGFLHVRYGC…MVTPFKIIGG (372 aa). Residues His-2243, Cys-2248, Cys-2253, Cys-2256, Cys-2289, His-2292, Cys-2296, and Cys-2299 each contribute to the Zn(2+) site. The ZF1 stretch occupies residues 2243–2256; sequence HVRYGCNNVACLMC. The ZF2 stretch occupies residues 2289-2299; that stretch reads CTKHNWNCVSC. The tract at residues 2330–2425 is Y2; that stretch reads EAYYEVTSVE…LVDKRMVGVV (96 aa). Positions 2330-2610 are coV-Y; that stretch reads EAYYEVTSVE…MVTPFKIIGG (281 aa). Residues 2426 to 2509 form a Y3 region; sequence GDDATIARAM…SCIRLCHQEG (84 aa). A Y4 region spans residues 2510-2610; sequence WEWTTDSWNN…MVTPFKIIGG (101 aa). Transmembrane regions (helical) follow at residues 2621-2641, 2719-2739, 2865-2885, 2887-2907, 2916-2936, 2946-2966, and 2970-2990; these read LIHV…PWYI, VGTT…SVCY, AFDL…AVDI, TSIL…YYLL, YSGV…VLCL, IYAM…ACMM, and FLIM…IVVV. An HD2 region spans residues 2621 to 2990; that stretch reads LIHVFMLLVV…WVTVLYIVVV (370 aa). One can recognise a Nsp4C domain in the interval 3007-3103; sequence VQVGDLAFHS…RCSVASAALQ (97 aa). One can recognise a Peptidase C30 domain in the interval 3104–3409; it reads AGLTRMAHPS…GRQMLGVKLQ (306 aa). Residues His-3144 and Cys-3248 each act as for 3CL-PRO activity in the active site. The next 7 helical transmembrane spans lie at 3423-3443, 3449-3469, 3474-3494, 3517-3537, 3569-3589, 3592-3612, and 3620-3640; these read FAII…WTFV, TLLL…SLLI, TYLT…NFQY, VIGT…LLSV, VAIS…GVAC, LYAA…ILLL, and LVCY…FNLI. Residues 3423-3640 form an HD3 region; sequence FAIIFVLTIL…TCYFGVFNLI (218 aa). The region spanning 3700 to 3782 is the RdRp Nsp7 cofactor domain; that stretch reads SNMTDLKCTS…SILENNSVLQ (83 aa). In terms of domain architecture, RdRp Nsp8 cofactor spans 3783–3982; that stretch reads AVASEFSNLS…QQATSPVKLQ (200 aa). A Nsp9 ssRNA-binding domain is found at 3983–4094; it reads NNELMPQTVK…GTLACTVRLH (112 aa). One can recognise an ExoN/MTase coactivator domain in the interval 4095–4233; sequence AGSATEVASN…CSSLREINLQ (139 aa). Zn(2+) is bound by residues Cys-4168, Cys-4171, His-4177, Cys-4184, Cys-4211, Cys-4214, Cys-4222, and Cys-4224. Zinc fingers lie at residues 4168–4184 and 4211–4224; these read CLYC…SGVC and CAVC…GCPC. A NiRAN domain is found at 4239 to 4494; that stretch reads FLNRVRGTSG…AAECHVDGDF (256 aa). Asn-4442 and Asp-4451 together coordinate Mn(2+). The Nsp12 Interface domain maps to 4499-4597; it reads RVWDICKYDY…MNQDIRQHAQ (99 aa). His-4528, Cys-4534, Cys-4539, Cys-4543, and Cys-4720 together coordinate Zn(2+). Residues 4598-5165 form the Nsp12 RNA-dependent RNA polymerase domain; that stretch reads RLSLRELLVY…NMYMESATLQ (568 aa). The tract at residues 4600 to 4814 is rdRp Fingers N-ter; sequence SLRELLVYAA…HQKMLKSIAA (215 aa). A rdRp Palm N-ter region spans residues 4815 to 4853; the sequence is ARGASVVIGTTKFYGGWNRMLRTLCEGVENPHLMGWDYP. Residues 4845-5007 enclose the RdRp catalytic domain; that stretch reads PHLMGWDYPK…CYNADYAQKG (163 aa). A rdRp Fingers C-ter region spans residues 4854–4912; that stretch reads KCDRAMPNLLRIFASLILARKHATCCNASERFYRLANECAQVLSEMVLCGGGFYVKPGG. 3 residues coordinate Zn(2+): His-4875, Cys-4878, and Cys-4879. The interval 4913-5048 is rdRp Palm C-ter; it reads TSSGDSTTAY…TKGPHEFCSQ (136 aa). Active-site residues include Ser-4992, Asp-4993, and Asp-4994. Residues 5049–5165 form a rdRp Thumb region; it reads HTMLVDMKGE…NMYMESATLQ (117 aa). In terms of domain architecture, CV ZBD spans 5166–5278; that stretch reads SVGTCVVCNS…ADFNSLATCD (113 aa). Positions 5170, 5173, 5181, 5184, 5191, 5194, 5198, 5204, 5215, 5220, 5237, and 5240 each coordinate Zn(2+). The (+)RNA virus helicase ATP-binding domain occupies 5412–5603; it reads TKLVGLYPAM…MVAVGPDIFL (192 aa). Position 5447 to 5454 (5447 to 5454) interacts with ATP; it reads GPPGTGKS. The region spanning 5604–5778 is the (+)RNA virus helicase C-terminal domain; sequence ATCYRCPKEI…VTVGLFKDCA (175 aa). Positions 5838 to 6056 constitute an ExoN domain; sequence LFITREQAIR…RCLAIHDCFC (219 aa). Active-site residues include Asp-5856, Glu-5858, and Glu-5957. Cys-5973, Cys-5976, Cys-5992, His-5995, His-6026, Cys-6030, and His-6033 together coordinate Zn(2+). Catalysis depends on residues His-6037 and Asp-6042. Cys-6048 lines the Zn(2+) pocket. The N7-MTase domain occupies 6065–6296; that stretch reads YPIIANELAI…NLWSTFVKLQ (232 aa). An S-adenosyl-L-methionine-binding site is contributed by 6100–6106; it reads DIGNPKA. The segment at 6180 to 6194 is gpppA-binding; the sequence is CNGGSLYVNQHAFHT. Cys-6218, Cys-6242, Cys-6253, and His-6256 together coordinate Zn(2+). One can recognise a Nsp15 N-terminal oligomerization domain in the interval 6297 to 6357; sequence SLENVAYNVL…NVAFELWAKR (61 aa). An AV-Nsp11N/CoV-Nsp15M domain is found at 6358–6476; that stretch reads SVNVVPEVKL…YAMRKDGAFV (119 aa). One can recognise a NendoU domain in the interval 6493–6630; that stretch reads QPRTQLEIDF…KGGKISTFYP (138 aa). Catalysis depends on residues His-6523, His-6537, Lys-6576, Lys-6679, Asp-6763, Lys-6803, and Glu-6836. In terms of domain architecture, Nidovirus-type SAM-dependent 2'-O-MTase spans 6635–6928; that stretch reads KQDWKPGYSM…DIGVRGVACS (294 aa).

This sequence belongs to the coronaviruses polyprotein 1ab family. As to quaternary structure, interacts with host PHB and PHB2. Interacts with papain-like protease nsp3 and non-structural protein 6. In terms of assembly, monomer. Homodimer. Only the homodimer shows catalytic activity. As to quaternary structure, interacts with nsp8 and nsp12 to form the replication-transcription complex (RTC): nsp12, nsp7, two subunits of nsp8, and up to two subunits of nsp13. Interacts with nsp7, nsp13 and nsp12 to form the replication-transcription complex (RTC): nsp12, nsp7, two subunits of nsp8, and up to two subunits of nsp13. In terms of assembly, interacts with nsp12. As to quaternary structure, interacts with proofreading exoribonuclease nsp14 and 2'-O-methyltransferase nsp16; these interactions enhance nsp14 and nsp16 enzymatic activities. Interacts with nsp7 and nsp8 to form the replication-transcription complex (RTC): nsp12, nsp7, two subunits of nsp8, and up to two subunits of nsp13. Interacts with nsp9. In terms of assembly, interacts with nsp8 to form the replication-transcription complex (RTC): nsp12, nsp7, two subunits of nsp8, and up to two subunits of nsp13. Mn(2+) serves as cofactor. Mg(2+) is required as a cofactor. Specific enzymatic cleavages in vivo by its own proteases yield mature proteins. 3CL-PRO and PL-PRO proteinases are autocatalytically processed.

Its subcellular location is the host membrane. The protein resides in the host cytoplasm. It localises to the host perinuclear region. It is found in the host endoplasmic reticulum-Golgi intermediate compartment. The enzyme catalyses RNA(n) + a ribonucleoside 5'-triphosphate = RNA(n+1) + diphosphate. The catalysed reaction is ATP + H2O = ADP + phosphate + H(+). It carries out the reaction Thiol-dependent hydrolysis of ester, thioester, amide, peptide and isopeptide bonds formed by the C-terminal Gly of ubiquitin (a 76-residue protein attached to proteins as an intracellular targeting signal).. It catalyses the reaction a 5'-end (N(7)-methyl 5'-triphosphoguanosine)-ribonucleoside in mRNA + S-adenosyl-L-methionine = a 5'-end (N(7)-methyl 5'-triphosphoguanosine)-(2'-O-methyl-ribonucleoside) in mRNA + S-adenosyl-L-homocysteine + H(+). The enzyme catalyses uridylyl-uridylyl-ribonucleotide-RNA = a 3'-end uridylyl-2',3'-cyclophospho-uridine-RNA + a 5'-end dephospho-ribonucleoside-RNA. The catalysed reaction is a 5'-end diphospho-ribonucleoside in mRNA + GTP + H(+) = a 5'-end (5'-triphosphoguanosine)-ribonucleoside in mRNA + diphosphate. It carries out the reaction a 5'-end (5'-triphosphoguanosine)-ribonucleoside in mRNA + S-adenosyl-L-methionine = a 5'-end (N(7)-methyl 5'-triphosphoguanosine)-ribonucleoside in mRNA + S-adenosyl-L-homocysteine. Functionally, the replicase polyprotein of coronaviruses is a multifunctional protein: it contains the activities necessary for the transcription of negative stranded RNA, leader RNA, subgenomic mRNAs and progeny virion RNA as well as proteinases responsible for the cleavage of the polyprotein into functional products. Its function is as follows. Inhibits host translation by interacting with the 40S ribosomal subunit. The nsp1-40S ribosome complex further induces an endonucleolytic cleavage near the 5'UTR of host mRNAs, targeting them for degradation. Viral mRNAs are not susceptible to nsp1-mediated endonucleolytic RNA cleavage thanks to the presence of a 5'-end leader sequence and are therefore protected from degradation. By suppressing host gene expression, nsp1 facilitates efficient viral gene expression in infected cells and evasion from host immune response. May play a role in the modulation of host cell survival signaling pathway by interacting with host PHB and PHB2. Indeed, these two proteins play a role in maintaining the functional integrity of the mitochondria and protecting cells from various stresses. In terms of biological role, responsible for the cleavages located at the N-terminus of the replicase polyprotein. In addition, PL-PRO possesses a deubiquitinating/deISGylating activity and processes both 'Lys-48'- and 'Lys-63'-linked polyubiquitin chains from cellular substrates. Participates together with nsp4 in the assembly of virally-induced cytoplasmic double-membrane vesicles necessary for viral replication. Antagonizes innate immune induction of type I interferon by blocking the phosphorylation, dimerization and subsequent nuclear translocation of host IRF3. Also prevents host NF-kappa-B signaling. Functionally, participates in the assembly of virally-induced cytoplasmic double-membrane vesicles necessary for viral replication. Its function is as follows. Cleaves the C-terminus of replicase polyprotein at 11 sites. Recognizes substrates containing the core sequence [ILMVF]-Q-|-[SGACN]. Also able to bind an ADP-ribose-1''-phosphate (ADRP). Plays a role in the initial induction of autophagosomes from host endoplasmic reticulum. Later, limits the expansion of these phagosomes that are no longer able to deliver viral components to lysosomes. In terms of biological role, forms a hexadecamer with nsp8 (8 subunits of each) that may participate in viral replication by acting as a primase. Alternatively, may synthesize substantially longer products than oligonucleotide primers. Functionally, forms a hexadecamer with nsp7 (8 subunits of each) that may participate in viral replication by acting as a primase. Alternatively, may synthesize substantially longer products than oligonucleotide primers. Its function is as follows. Forms a primer, NSP9-pU, which is utilized by the polymerase for the initiation of RNA chains. Interacts with ribosome signal recognition particle RNA (SRP). Together with NSP8, suppress protein integration into the cell membrane, thereby disrupting host immune defenses. Plays a pivotal role in viral transcription by stimulating both nsp14 3'-5' exoribonuclease and nsp16 2'-O-methyltransferase activities. Therefore plays an essential role in viral mRNAs cap methylation. In terms of biological role, RNA-directed RNA polymerase that catalyzes the transcription of viral genomic and subgenomic RNAs. Acts in complex with nsp7 and nsp8 to transcribe both the minus and positive strands of genomic RNA. The kinase-like NiRAN domain of NSP12 attaches one or more nucleotides to the amino terminus of NSP9, forming a covalent RNA-protein intermediate that serves as transcription/replication primer. Subgenomic RNAs (sgRNAs) are formed by discontinuous transcription: The polymerase has the ability to pause at transcription-regulating sequences (TRS) and jump to the leader TRS, resulting in a major deletion. This creates a series of subgenomic RNAs that are replicated, transcribed and translated. In addition, Nsp12 is a subunit of the viral RNA capping enzyme that catalyzes the RNA guanylyltransferase reaction for genomic and sub-genomic RNAs. Subsequently, the NiRAN domain transfers RNA to GDP, and forms the core cap structure GpppA-RNA. Functionally, multi-functional protein with a zinc-binding domain in N-terminus displaying RNA and DNA duplex-unwinding activities with 5' to 3' polarity. Activity of helicase is dependent on magnesium. Its function is as follows. Plays a role in viral RNA synthesis through two distinct activities. The N7-guanine methyltransferase activity plays a role in the formation of the cap structure GpppA-RNA. The proofreading exoribonuclease reduces the sensitivity of the virus to RNA mutagens during replication. This activity acts on both ssRNA and dsRNA in a 3'-5' direction. Plays a role in viral transcription/replication and prevents the simultaneous activation of host cell dsRNA sensors, such as MDA5/IFIH1, OAS, and PKR. Acts by degrading the 5'-polyuridines generated during replication of the poly(A) region of viral genomic and subgenomic RNAs. Catalyzes a two-step reaction in which a 2'3'-cyclic phosphate (2'3'-cP) is first generated by 2'-O transesterification, which is then hydrolyzed to a 3'-phosphate (3'-P). If not degraded, poly(U) RNA would hybridize with poly(A) RNA tails and activate host dsRNA sensors. In terms of biological role, methyltransferase that mediates mRNA cap 2'-O-ribose methylation to the 5'-cap structure of viral mRNAs. N7-methyl guanosine cap is a prerequisite for binding of nsp16. Therefore plays an essential role in viral mRNAs cap methylation which is essential to evade immune system. The protein is Replicase polyprotein 1ab (rep) of Bat coronavirus HKU9 (BtCoV).